Here is a 529-residue protein sequence, read N- to C-terminus: Interleukin-21 receptor (529 aa).

An N-terminal signal peptide occupies residues 1–19 (MPRGPVAALLLLILHGAWS). 3 cysteine pairs are disulfide-bonded: Cys-20/Cys-109, Cys-25/Cys-35, and Cys-65/Cys-81. The Extracellular portion of the chain corresponds to 20–237 (CLDLTCYTDY…GEPEAGWDPH (218 aa)). Fibronectin type-III domains are found at residues 21 to 118 (LDLT…AESI) and 119 to 228 (KPAP…TQAG). Asn-73, Asn-97, Asn-104, Asn-125, and Asn-182 each carry an N-linked (GlcNAc...) asparagine glycan. Residue Trp-214 is glycosylated (C-linked (Man) tryptophan). Residues 214-218 (WSEWS) carry the WSXWS motif motif. Residues 238–258 (MLLLLAVLIIVLVFMGLKIHL) traverse the membrane as a helical segment. The Cytoplasmic segment spans residues 259–529 (PWRLWKKIWA…PPVDSGAQSS (271 aa)). The Box 1 motif motif lies at 266 to 274 (IWAPVPTPE). Positions 458–529 (TADPTWRTGS…PPVDSGAQSS (72 aa)) are disordered.

Belongs to the type I cytokine receptor family. Type 4 subfamily. As to quaternary structure, heterodimer with the common gamma subunit. Associates with JAK1. Post-translationally, C-mannosylated at Trp-214 in the WSXWS motif, the sugar chain makes extensive hydrogen bonds with Asn-73 sugar, and bridges the two fibronectin domains transforming the V-shaped receptor into an A-frame. Selectively expressed in lymphoid tissues. Most highly expressed in thymus and spleen.

Its subcellular location is the membrane. This is a receptor for interleukin-21. The polypeptide is Interleukin-21 receptor (Il21r) (Mus musculus (Mouse)).